The chain runs to 207 residues: Enolase (207 aa).

Gln162 is a binding site for (2R)-2-phosphoglycerate. The Proton donor role is filled by Glu204.

This sequence belongs to the enolase family.

Its subcellular location is the cytoplasm. The protein resides in the secreted. It localises to the cell surface. The catalysed reaction is (2R)-2-phosphoglycerate = phosphoenolpyruvate + H2O. The protein operates within carbohydrate degradation; glycolysis; pyruvate from D-glyceraldehyde 3-phosphate: step 4/5. Functionally, catalyzes the reversible conversion of 2-phosphoglycerate (2-PG) into phosphoenolpyruvate (PEP). It is essential for the degradation of carbohydrates via glycolysis. This is Enolase from Campylobacter fetus.